The following is a 175-amino-acid chain: MALTLEQKQQVVAEVSEVAANAYSAVAAEYHGIGVAKLTKLREQAREKGVVLKVVKNTLAKRAFEGTKFESMSDRMTGPLLLAFSMEDLGSAARVVFDFSKDNKALETKLVSVGGVVYGPEELERVSKLPTRDEAISILMATMNAPVTKLVQTMNAVPGKLVRTVAAIKDAKEAA.

The protein belongs to the universal ribosomal protein uL10 family. As to quaternary structure, part of the ribosomal stalk of the 50S ribosomal subunit. The N-terminus interacts with L11 and the large rRNA to form the base of the stalk. The C-terminus forms an elongated spine to which L12 dimers bind in a sequential fashion forming a multimeric L10(L12)X complex.

In terms of biological role, forms part of the ribosomal stalk, playing a central role in the interaction of the ribosome with GTP-bound translation factors. In Psychrobacter arcticus (strain DSM 17307 / VKM B-2377 / 273-4), this protein is Large ribosomal subunit protein uL10.